Consider the following 322-residue polypeptide: Ribose-phosphate pyrophosphokinase (322 aa).

Residues Asp-43–Glu-45 and Arg-102–Gln-103 contribute to the ATP site. Residues His-137 and Asp-177 each coordinate Mg(2+). The active site involves Lys-201. Residues Arg-203, Asp-227, and Asp-231–Thr-235 contribute to the D-ribose 5-phosphate site.

It belongs to the ribose-phosphate pyrophosphokinase family. Class I subfamily. As to quaternary structure, homohexamer. It depends on Mg(2+) as a cofactor.

The protein resides in the cytoplasm. The catalysed reaction is D-ribose 5-phosphate + ATP = 5-phospho-alpha-D-ribose 1-diphosphate + AMP + H(+). It participates in metabolic intermediate biosynthesis; 5-phospho-alpha-D-ribose 1-diphosphate biosynthesis; 5-phospho-alpha-D-ribose 1-diphosphate from D-ribose 5-phosphate (route I): step 1/1. Involved in the biosynthesis of the central metabolite phospho-alpha-D-ribosyl-1-pyrophosphate (PRPP) via the transfer of pyrophosphoryl group from ATP to 1-hydroxyl of ribose-5-phosphate (Rib-5-P). This Xylella fastidiosa (strain 9a5c) protein is Ribose-phosphate pyrophosphokinase.